A 94-amino-acid polypeptide reads, in one-letter code: Co-chaperonin GroES (94 aa).

Belongs to the GroES chaperonin family. In terms of assembly, heptamer of 7 subunits arranged in a ring. Interacts with the chaperonin GroEL.

The protein resides in the cytoplasm. Functionally, together with the chaperonin GroEL, plays an essential role in assisting protein folding. The GroEL-GroES system forms a nano-cage that allows encapsulation of the non-native substrate proteins and provides a physical environment optimized to promote and accelerate protein folding. GroES binds to the apical surface of the GroEL ring, thereby capping the opening of the GroEL channel. This chain is Co-chaperonin GroES, found in Latilactobacillus sakei subsp. sakei (strain 23K) (Lactobacillus sakei subsp. sakei).